The chain runs to 127 residues: Evasin-4 (127 aa).

The signal sequence occupies residues 1-23; sequence MAFKYWFVFAAVLYARQWLSTKC. 4 cysteine pairs are disulfide-bonded: cysteine 50–cysteine 69, cysteine 65–cysteine 112, cysteine 86–cysteine 117, and cysteine 107–cysteine 126. N-linked (GlcNAc...) asparagine glycans are attached at residues asparagine 54, asparagine 64, asparagine 70, asparagine 77, asparagine 83, asparagine 106, and asparagine 114.

It belongs to the evasin C8 family. In terms of assembly, monomer.

Its subcellular location is the secreted. Its function is as follows. Salivary chemokine-binding protein which has chemokine-neutralizing activity and binds to host chemokines CCL1, CCL3, CCL5, CCL7, CCL8, CCL11, CCL14, CCL15, CCL16, CCL17, CCL18, CCL19, CCL21, CCL22, CCL23, CCL24, CCL25 and CCL26 with nanomolar affinity. Binds to CCL3 and CCL5 with 1:1 stoichiometry. Although binding to CCL25 is observed, does not inhibit CCL25-induced chemotaxis. Has been shown to reduce cardiac injury and inflammation in mice through its anti-CCL5 activity. This Rhipicephalus sanguineus (Brown dog tick) protein is Evasin-4.